The sequence spans 1088 residues: Protocadherin-19 (1088 aa).

An N-terminal signal peptide occupies residues Met1–Ala24. The Extracellular segment spans residues Val25–Ser678. 6 consecutive Cadherin domains span residues Thr31–Phe130, Pro131–Phe239, Asp240–Ile347, Ser351–Phe454, Thr455–Met563, and Val569–Asn676. The Ca(2+) site is built by Glu34 and Glu35. An N-linked (GlcNAc...) asparagine glycan is attached at Asn44. Ca(2+) contacts are provided by Asp89 and Asp91. Cys94 and Cys100 are joined by a disulfide. Positions 122, 123, 124, 125, 126, 141, 156, 158, 162, 200, 213, 231, 232, 233, 234, 235, and 250 each coordinate Ca(2+). N-linked (GlcNAc...) asparagine glycosylation occurs at Asn262. Residues Asp265, Asp267, and Asn271 each coordinate Ca(2+). An N-linked (GlcNAc...) asparagine glycan is attached at Asn284. Asp306, Glu308, Asp339, Ile340, Asn341, Asp342, Asn343, Glu361, and Asp376 together coordinate Ca(2+). Asn377 carries an N-linked (GlcNAc...) asparagine glycan. Positions 378, 382, 413, and 415 each coordinate Ca(2+). N-linked (GlcNAc...) asparagine glycosylation is present at Asn421. Ca(2+)-binding residues include Asp428, Asp446, Glu447, Asn448, Asp449, Asn450, Glu465, Asp480, Asp482, Asn486, Asn522, Glu524, and Asp537. An N-linked (GlcNAc...) asparagine glycan is attached at Asn486. An N-linked (GlcNAc...) asparagine glycan is attached at Asn546. Ca(2+) is bound by residues Asp555, Val556, Asn557, Asp558, and Asn559. Asn570 carries an N-linked (GlcNAc...) asparagine glycan. Positions 594, 596, 600, and 646 each coordinate Ca(2+). Asn676 carries an N-linked (GlcNAc...) asparagine glycan. The chain crosses the membrane as a helical span at residues Leu679–Val699. Over Ala700 to Leu1088 the chain is Cytoplasmic. 4 disordered regions span residues Asn792–Gln813, Asp851–Gln875, Thr970–Thr1032, and Thr1067–Leu1088. Over residues Asp859–Gln875 the composition is skewed to basic and acidic residues. Positions Asp1071–Leu1088 are enriched in basic and acidic residues.

As to quaternary structure, homodimer; antiparallel. Interacts with cadherin cdh2; the interaction confers robust cell adhesion activity on pcdh19. In the embryo, strongly expressed in the developing nervous system. At 12 hours post fertilization (hpf), shows a segmental expression pattern in the anterior third of the neural keel with strong expression in the presumptive forebrain, cerebellum/rhombomere 1 and rhombomere 4. By 24 hpf, expressed widely in the brain and spinal cord with higher expression levels in the ventral telencephalon, dorsal and central thalamus, optic tectum, central tegmentum, cerebellum and dorsolateral regions of the hindbrain. As development proceeds, expression becomes restricted to the dorsal and/or lateral regions of the central nervous system. Not detected in the spinal cord of two- and three-day old embryos. Expressed in the eye primordium, developing retina, lens and otic vesicle. Expressed in the larval optic tectum at 4 days post-fertilization where it localizes in discrete columns of neurons. Expressed throughout the adult brain with strong expression in the ventromedial telencephalon, periventricular regions of the thalamus and anterior hypothalamus, stratum periventriculare of the optic tectum, dorsal tegmental nucleus, granular regions of the cerebellar body and valvula, and superficial layers of the facial and vagal lobes.

It is found in the cell membrane. Calcium-dependent cell-adhesion protein. Essential for the early stages of neurulation in the anterior neural plate. Shows little cell adhesion activity on its own but exhibits robust homophilic cell adhesion when in a complex with cadherin cdh2 and appears to mediate the adhesion while cdh2 acts as a cell adhesion cofactor in the complex. Functions with cdh2 to coordinate cell adhesion and cell movements during neurulation. Contributes to neural progenitor cell patterning with cdh2 by promoting homophilic cell interactions. Regulates the columnar organization of neurons in the optic tectum. The chain is Protocadherin-19 from Danio rerio (Zebrafish).